The chain runs to 434 residues: F-box/kelch-repeat protein At1g55270 (434 aa).

The region spanning 76–122 (PPLLPGLPDDLAVACLIRVPRAEHRKLRLVCKRWYRLASGNFFYSQR) is the F-box domain. Kelch repeat units lie at residues 129-178 (EEWV…VLSG), 180-227 (HLYL…VINN), 229-276 (LYVA…VYDK), 278-321 (WFLK…SLNG), and 325-371 (GLDC…LHNK).

The sequence is that of F-box/kelch-repeat protein At1g55270 from Arabidopsis thaliana (Mouse-ear cress).